Consider the following 304-residue polypeptide: Putative dihydroorotate dehydrogenase A (fumarate) (304 aa).

FMN contacts are provided by residues serine 21 and 45–46; that span reads KS. Residues lysine 45, 69-73, and asparagine 129 each bind substrate; that span reads NAVGL. Asparagine 129 serves as a coordination point for FMN. Cysteine 132 (nucleophile) is an active-site residue. Positions 168 and 194 each coordinate FMN. Substrate is bound at residue 195-196; that stretch reads NT. FMN contacts are provided by residues glycine 220, 246-247, and 268-269; these read GG and GS.

Belongs to the dihydroorotate dehydrogenase family. Type 1 subfamily. As to quaternary structure, homodimer. FMN serves as cofactor.

It localises to the cytoplasm. It catalyses the reaction (S)-dihydroorotate + fumarate = orotate + succinate. Its pathway is pyrimidine metabolism; UMP biosynthesis via de novo pathway. Catalyzes the conversion of dihydroorotate to orotate with fumarate as the electron acceptor. This is Putative dihydroorotate dehydrogenase A (fumarate) (pyrD) from Pediococcus pentosaceus (strain ATCC 25745 / CCUG 21536 / LMG 10740 / 183-1w).